The chain runs to 289 residues: MTGPRVRTVTAAALRAQPLPAPGGDKEQRGRVLIVGGSARVPGAVMLAGEAALRAGAGKLQLATAASVAPGMALAMPEALVLGLGENGQGEIVRGHRALDAAMSACDAAVIGPGMASTNTTAALVKRAIDQAVCTLVLDAGALSPRLRAPLGRPFVLTPHAGEMAALAGDDKAAVEAAPADYALAFAKKMRSVVIVKGADSFVAGPDGALWVHRGGVPGLGTSGSGDTLAGLIAGFAARGCDALTAALWGVFVHATAGKQLAKRIGTVGFLAREIPPEVPGILDRLPRG.

The YjeF C-terminal domain occupies 9–286 (VTAAALRAQP…PEVPGILDRL (278 aa)). (6S)-NADPHX-binding residues include A44 and H160. AMP is bound by residues 197–201 (KGADS) and G226. D227 contributes to the (6S)-NADPHX binding site.

The protein belongs to the NnrD/CARKD family. In terms of assembly, homotetramer. Requires Mg(2+) as cofactor.

The catalysed reaction is (6S)-NADHX + ADP = AMP + phosphate + NADH + H(+). It carries out the reaction (6S)-NADPHX + ADP = AMP + phosphate + NADPH + H(+). Its function is as follows. Catalyzes the dehydration of the S-form of NAD(P)HX at the expense of ADP, which is converted to AMP. Together with NAD(P)HX epimerase, which catalyzes the epimerization of the S- and R-forms, the enzyme allows the repair of both epimers of NAD(P)HX, a damaged form of NAD(P)H that is a result of enzymatic or heat-dependent hydration. The protein is ADP-dependent (S)-NAD(P)H-hydrate dehydratase of Xanthomonas campestris pv. campestris (strain ATCC 33913 / DSM 3586 / NCPPB 528 / LMG 568 / P 25).